Consider the following 93-residue polypeptide: Co-chaperonin GroES (93 aa).

It belongs to the GroES chaperonin family. As to quaternary structure, heptamer of 7 subunits arranged in a ring. Interacts with the chaperonin GroEL.

Its subcellular location is the cytoplasm. Functionally, together with the chaperonin GroEL, plays an essential role in assisting protein folding. The GroEL-GroES system forms a nano-cage that allows encapsulation of the non-native substrate proteins and provides a physical environment optimized to promote and accelerate protein folding. GroES binds to the apical surface of the GroEL ring, thereby capping the opening of the GroEL channel. This chain is Co-chaperonin GroES, found in Streptococcus constellatus.